Consider the following 207-residue polypeptide: Putative 3-methyladenine DNA glycosylase (207 aa).

Over residues 182–193 (PAPAGARAARAP) the composition is skewed to low complexity. A disordered region spans residues 182–207 (PAPAGARAARAPAPAPRPRRPRGSGP). Residues 198-207 (RPRRPRGSGP) are compositionally biased toward basic residues.

It belongs to the DNA glycosylase MPG family.

This is Putative 3-methyladenine DNA glycosylase from Anaeromyxobacter dehalogenans (strain 2CP-C).